The sequence spans 306 residues: uncharacterized protein (306 aa).

N208 carries an N-linked (GlcNAc...) asparagine glycan. The next 2 membrane-spanning stretches (helical) occupy residues 218-238 and 284-304; these read VFEI…VLFY and VMLV…KITK.

The protein resides in the membrane. This is an uncharacterized protein from Encephalitozoon cuniculi (strain GB-M1) (Microsporidian parasite).